The following is a 66-amino-acid chain: Neurotoxin Cex11 (66 aa).

Residues 1–64 form the LCN-type CS-alpha/beta domain; the sequence is KEGYPVNIYT…SYPYPEKSCG (64 aa). Cystine bridges form between C12–C63, C16–C39, C25–C44, and C29–C46. Cysteine amide is present on C63. Positions 64 to 66 are excised as a propeptide; that stretch reads GRK.

Belongs to the long (4 C-C) scorpion toxin superfamily. Sodium channel inhibitor family. Beta subfamily. Expressed by the venom gland.

Its subcellular location is the secreted. Its function is as follows. Beta toxins bind voltage-independently at site-4 of sodium channels (Nav) and shift the voltage of activation toward more negative potentials thereby affecting sodium channel activation and promoting spontaneous and repetitive firing. The polypeptide is Neurotoxin Cex11 (Centruroides exilicauda (Bark scorpion)).